Consider the following 61-residue polypeptide: SPbeta prophage-derived uncharacterized protein YotK (61 aa).

The stretch at Ser7–Lys57 forms a coiled coil.

The sequence is that of SPbeta prophage-derived uncharacterized protein YotK (yotK) from Bacillus subtilis (strain 168).